Reading from the N-terminus, the 253-residue chain is Ribosome maturation factor RimP (253 aa).

Over residues 186–199 (RRGKAAEREKKRDL) the composition is skewed to basic and acidic residues. A disordered region spans residues 186–253 (RRGKAAEREK…RARRGEIDPD (68 aa)). The span at 201–216 (LAPPLAPHAKPAAQAK) shows a compositional bias: low complexity. Residues 240–253 (LAADRARRGEIDPD) are compositionally biased toward basic and acidic residues.

It belongs to the RimP family.

It is found in the cytoplasm. Functionally, required for maturation of 30S ribosomal subunits. The sequence is that of Ribosome maturation factor RimP from Bradyrhizobium sp. (strain BTAi1 / ATCC BAA-1182).